The chain runs to 177 residues: O-acetyl-ADP-ribose deacetylase (177 aa).

The Macro domain occupies 1–175 (MKTRIHVVQG…LYERLLTQQG (175 aa)). Substrate is bound by residues 11 to 12 (DI), Asn25, 33 to 35 (GVD), and 122 to 126 (STGVY). Catalysis depends on Asp35, which acts as the Proton acceptor.

It belongs to the MacroD-type family. YmdB subfamily. In terms of assembly, homodimer. Interacts with RNase III.

The catalysed reaction is 3''-O-acetyl-ADP-D-ribose + H2O = ADP-D-ribose + acetate + H(+). The enzyme catalyses 2''-O-acetyl-ADP-D-ribose + H2O = ADP-D-ribose + acetate + H(+). Deacetylates O-acetyl-ADP ribose to yield ADP-ribose and free acetate. Down-regulates ribonuclease 3 (RNase III) activity. Acts by interacting directly with the region of the ribonuclease that is required for dimerization/activation. This chain is O-acetyl-ADP-ribose deacetylase, found in Shigella dysenteriae serotype 1 (strain Sd197).